The sequence spans 2346 residues: N-benzoylphenylalaninol synthetase apmA (2346 aa).

Residues 263–652 (ESAAQKSPDA…GRKDLQVKIR (390 aa)) are adenylation 1. Residues 784–860 (MPTTTTEMTL…DMAKAMTSTR (77 aa)) enclose the Carrier 1 domain. An O-(pantetheine 4'-phosphoryl)serine modification is found at S821. Positions 896–1306 (QDAYPCSPLQ…ISPQDKENLL (411 aa)) are condensation. The tract at residues 1330–1713 (SQPNAPAICA…GRKDTQVKIR (384 aa)) is adenylation 2. The 83-residue stretch at 1842–1924 (SALRASEDKA…GLAAFIDAEL (83 aa)) folds into the Carrier 2 domain. An O-(pantetheine 4'-phosphoryl)serine modification is found at S1883. Residues 1960–2311 (VTGGTGFLGT…RNVQFLVEAG (352 aa)) are reductase (R) domain.

This sequence belongs to the NRP synthetase family.

The enzyme catalyses benzoate + L-phenylalanine + 2 AH2 + 2 ATP = N-benzoyl-L-phenylalaninol + 2 A + 2 AMP + 2 diphosphate + H(+). Its pathway is secondary metabolite biosynthesis. Nonribosomal peptide synthase; part of the gene cluster that mediates the biosynthesis of asperphenamate, a rare linear amino acid ester that exhibits antitumor activity towards a number of cell lines. The structure of asperphenamate contains two subunits, N-benzoylphenylalanine and N-benzoylphenylalaninol, which are connected by an inter-molecular ester bond. The first step of asperphenamate biosynthesis is the generation of N-benzoylphenylalaninol by the nonribosomal peptide synthase apmA. Using phenylalanine and benzoic acid as substrates, apmA catalyzes amide bond formation and tethers the intermediate into the NRPS chain. Then, the terminal R domain of apmA catalyzes the reduction reaction to get the shunt product N-benzoylphenylalaninol. Subsequently, the nonribosomal peptide synthase apmB activates the same substrates as does apmA (phenylalanine and benzoic acid) to produce N-benzoylphenylalanine before condensing N-benzoylphenylalanine and N-benzoylphenylalaninol to release asperphenamate. The protein is N-benzoylphenylalaninol synthetase apmA of Penicillium brevicompactum.